Consider the following 337-residue polypeptide: DNA-directed RNA polymerase subunit alpha (337 aa).

Residues 1–223 (MLISQRPALT…ELFGLAQELN (223 aa)) form an alpha N-terminal domain (alpha-NTD) region. Residues 238–337 (SEHIAAYSMP…IDTEGEDIAE (100 aa)) form an alpha C-terminal domain (alpha-CTD) region.

Belongs to the RNA polymerase alpha chain family. In terms of assembly, homodimer. The RNAP catalytic core consists of 2 alpha, 1 beta, 1 beta' and 1 omega subunit. When a sigma factor is associated with the core the holoenzyme is formed, which can initiate transcription.

The enzyme catalyses RNA(n) + a ribonucleoside 5'-triphosphate = RNA(n+1) + diphosphate. Its function is as follows. DNA-dependent RNA polymerase catalyzes the transcription of DNA into RNA using the four ribonucleoside triphosphates as substrates. This is DNA-directed RNA polymerase subunit alpha from Corynebacterium jeikeium (strain K411).